A 265-amino-acid polypeptide reads, in one-letter code: Glutamate racemase (265 aa).

Residues 10-11 (DS) and 42-43 (YG) each bind substrate. The Proton donor/acceptor role is filled by cysteine 73. 74 to 75 (NT) is a substrate binding site. Catalysis depends on cysteine 184, which acts as the Proton donor/acceptor. 185–186 (TH) is a binding site for substrate.

This sequence belongs to the aspartate/glutamate racemases family.

The enzyme catalyses L-glutamate = D-glutamate. The protein operates within cell wall biogenesis; peptidoglycan biosynthesis. Functionally, provides the (R)-glutamate required for cell wall biosynthesis. This Pediococcus pentosaceus (strain ATCC 25745 / CCUG 21536 / LMG 10740 / 183-1w) protein is Glutamate racemase.